We begin with the raw amino-acid sequence, 293 residues long: Homoserine kinase (293 aa).

Residue 84–94 (PLSRGLGSSSA) participates in ATP binding.

Belongs to the GHMP kinase family. Homoserine kinase subfamily.

It localises to the cytoplasm. The enzyme catalyses L-homoserine + ATP = O-phospho-L-homoserine + ADP + H(+). The protein operates within amino-acid biosynthesis; L-threonine biosynthesis; L-threonine from L-aspartate: step 4/5. In terms of biological role, catalyzes the ATP-dependent phosphorylation of L-homoserine to L-homoserine phosphate. This Nitratiruptor sp. (strain SB155-2) protein is Homoserine kinase.